Consider the following 559-residue polypeptide: Aspartokinase 3, chloroplastic (559 aa).

The N-terminal 85 residues, 1–85 (MAASMQFYGV…LNKTEKKLTC (85 aa)), are a transit peptide targeting the chloroplast. Residues Lys-88, Gly-91, and Ser-120 each contribute to the ATP site. Glu-204 serves as a coordination point for substrate. 2 ACT domains span residues 402–480 (ITST…SIIS) and 481–559 (LIGN…AASS).

The protein belongs to the aspartokinase family. As to expression, highly expressed in xylem of leaves and hypocotyls, stele of roots and in trichomes after bolting. Weak expression in veins and mesophyll cells of caulone leaves, inflorescence stems, sepals, petals and stigmata.

It localises to the plastid. The protein localises to the chloroplast. It catalyses the reaction L-aspartate + ATP = 4-phospho-L-aspartate + ADP. Its pathway is amino-acid biosynthesis; L-lysine biosynthesis via DAP pathway; (S)-tetrahydrodipicolinate from L-aspartate: step 1/4. The protein operates within amino-acid biosynthesis; L-methionine biosynthesis via de novo pathway; L-homoserine from L-aspartate: step 1/3. It functions in the pathway amino-acid biosynthesis; L-threonine biosynthesis; L-threonine from L-aspartate: step 1/5. Its activity is regulated as follows. Allosterically inhibited by lysine, but not by S-adenosyl-L-methionine (SAM). K(0.5) for lysine in the presence of physiological concentrations of substrates is 7.4 uM. No inhibition by threonine or leucine and no activation or inhibition by alanine, cysteine, isoleucine, serine, valine, methionine, glutamine, asparagine, glutamic acid or arginine. In terms of biological role, involved in the first step of essential amino acids lysine, threonine, methionine and isoleucine synthesis via the aspartate-family pathway. This Arabidopsis thaliana (Mouse-ear cress) protein is Aspartokinase 3, chloroplastic (AK3).